A 307-amino-acid polypeptide reads, in one-letter code: Woronin sorting complex protein (307 aa).

3 helical membrane passes run 106–125, 146–167, and 207–227; these read MATYGALVSAPLGHFLIWIL, NLIVAPIQNSVYLVAMAIIAGA, and AWMPFFNLVSFFIGTYINYIT. Basic and acidic residues predominate over residues 241 to 264; sequence GDGAHGDHRHDRERERDRERERHS. A disordered region spans residues 241 to 307; sequence GDGAHGDHRH…YPSLGQNPRY (67 aa). Residues 266-278 show a composition bias toward low complexity; sequence PPHGHGPSHGGRP.

It belongs to the peroxisomal membrane protein PXMP2/4 family. Self-assembles into detergent-resistant oligomers and forms a complex with hex-1 assemblies.

It localises to the peroxisome membrane. The protein localises to the cell septum. Woronin sorting complex protein involved in both Woronin bodies (WB) formation and inherence. Localizes to large peroxisome membranes where it self-assembles into detergent-resistant oligomers that envelop hex-1 assemblies, producing asymmetrical nascent WBs. These structures are then delivered to the cell cortex, which permits partitioning of the nascent WB and WB inheritance. This is Woronin sorting complex protein from Neurospora crassa (strain ATCC 24698 / 74-OR23-1A / CBS 708.71 / DSM 1257 / FGSC 987).